The following is a 158-amino-acid chain: Transcription elongation factor GreA (158 aa).

Residues 3 to 75 are a coiled coil; sequence TEKTYPMTQE…TQLENMIRNA (73 aa).

Belongs to the GreA/GreB family.

In terms of biological role, necessary for efficient RNA polymerase transcription elongation past template-encoded arresting sites. The arresting sites in DNA have the property of trapping a certain fraction of elongating RNA polymerases that pass through, resulting in locked ternary complexes. Cleavage of the nascent transcript by cleavage factors such as GreA or GreB allows the resumption of elongation from the new 3'terminus. GreA releases sequences of 2 to 3 nucleotides. This Bacillus cereus (strain ATCC 14579 / DSM 31 / CCUG 7414 / JCM 2152 / NBRC 15305 / NCIMB 9373 / NCTC 2599 / NRRL B-3711) protein is Transcription elongation factor GreA.